The sequence spans 332 residues: Azadirone synthase LFS (332 aa).

The region spanning 181–286 (ANANYTNMFH…RYSTGTFICP (106 aa)) is the Fe2OG dioxygenase domain. Positions 208, 210, and 269 each coordinate Fe cation. A 2-oxoglutarate-binding site is contributed by arginine 277.

It belongs to the iron/ascorbate-dependent oxidoreductase family. It depends on Fe(2+) as a cofactor. As to expression, mainly expressed in petioles and, to a lower extent, in roots.

The catalysed reaction is (1S,3bR,4R,5aR,9aR,9bR,11aS)-1-(1-hydroxy-4-oxobutan-2-yl)-3b,6,6,9a,11a-pentamethyl-7-oxo-1H,2H,3bH,4H,5H,5aH,6H,7H,9aH,9bH,10H,11H,11aH-cyclopenta[a]phenanthren-4-yl acetate + 2-oxoglutarate + O2 = azadirone + succinate + CO2 + 2 H2O. It participates in secondary metabolite biosynthesis; terpenoid biosynthesis. Functionally, 2-oxoglutarate-Fe(II) type oxidoreductase involved in the biosynthesis of limonoids triterpene natural products such as azadirachtin, an antifeedant widely used as bioinsecticide, and possessing many medicinal applications including anti-tumoral, anti-malarial, anti-rheumatic, antibacterial, anti-inflammatory, anti-pyretic and diuretic effects. Catalyzes the formation of azadirone. The sequence is that of Azadirone synthase LFS from Melia azedarach (Chinaberry tree).